Consider the following 637-residue polypeptide: Sterol 3-beta-glucosyltransferase UGT80A2 (637 aa).

Disordered stretches follow at residues 1–29 (MPEI…RASV) and 66–112 (VAES…TERQ). Residues 13–24 (SSSSSSSSSSSS) show a composition bias toward low complexity. Polar residues predominate over residues 67-79 (AESSGTGNKSFSR). Positions 103-112 (RLDKSKTERQ) are enriched in basic and acidic residues.

Belongs to the glycosyltransferase 28 family. Expressed in roots, cauline leaf epidermal cells, stomata, stamen, pollen and around the base of siliques.

It carries out the reaction a sterol + UDP-alpha-D-glucose = a sterol 3-beta-D-glucoside + UDP + H(+). Functionally, involved in the biosynthesis of sterol glucosides. Catalyzes the synthesis of steryl glycosides (SGs) and acyl steryl glycosides (ASGs) which are the most abundant sterol derivatives in higher plants. Can act on several sterols like sitosterol, campesterol and stigmasterol. Both UGT80A2 and UGT80B1 are required for the normal production of SGs and ASGs in seeds. This is Sterol 3-beta-glucosyltransferase UGT80A2 (UGT80A2) from Arabidopsis thaliana (Mouse-ear cress).